The chain runs to 395 residues: 1-deoxy-D-xylulose 5-phosphate reductoisomerase (395 aa).

Positions 10, 11, 12, 13, 37, 38, and 124 each coordinate NADPH. Residue K125 coordinates 1-deoxy-D-xylulose 5-phosphate. Residue E126 coordinates NADPH. D150 is a Mn(2+) binding site. 1-deoxy-D-xylulose 5-phosphate-binding residues include S151, E152, S179, and H202. E152 serves as a coordination point for Mn(2+). An NADPH-binding site is contributed by G208. 1-deoxy-D-xylulose 5-phosphate-binding residues include S215, N220, K221, and E224. Residue E224 coordinates Mn(2+).

Belongs to the DXR family. Mg(2+) serves as cofactor. Mn(2+) is required as a cofactor.

It catalyses the reaction 2-C-methyl-D-erythritol 4-phosphate + NADP(+) = 1-deoxy-D-xylulose 5-phosphate + NADPH + H(+). It participates in isoprenoid biosynthesis; isopentenyl diphosphate biosynthesis via DXP pathway; isopentenyl diphosphate from 1-deoxy-D-xylulose 5-phosphate: step 1/6. In terms of biological role, catalyzes the NADPH-dependent rearrangement and reduction of 1-deoxy-D-xylulose-5-phosphate (DXP) to 2-C-methyl-D-erythritol 4-phosphate (MEP). This Cupriavidus pinatubonensis (strain JMP 134 / LMG 1197) (Cupriavidus necator (strain JMP 134)) protein is 1-deoxy-D-xylulose 5-phosphate reductoisomerase.